A 262-amino-acid polypeptide reads, in one-letter code: Co-chaperone protein DjlA (262 aa).

The Periplasmic portion of the chain corresponds to 1 to 6; that stretch reads MRFWGK. The chain crosses the membrane as a helical span at residues 7 to 30; the sequence is FFGFVIGFMFGRFFGALLGLWLGH. Over 31-262 the chain is Cytoplasmic; the sequence is LYDKRPGGGA…DRVKSERGMR (232 aa). The J domain maps to 196-262; sequence DAYHLLGITA…DRVKSERGMR (67 aa).

Homodimer.

Its subcellular location is the cell inner membrane. Regulatory DnaK co-chaperone. Direct interaction between DnaK and DjlA is needed for the induction of the wcaABCDE operon, involved in the synthesis of a colanic acid polysaccharide capsule, possibly through activation of the RcsB/RcsC phosphotransfer signaling pathway. The colanic acid capsule may help the bacterium survive conditions outside the host. The polypeptide is Co-chaperone protein DjlA (Shewanella oneidensis (strain ATCC 700550 / JCM 31522 / CIP 106686 / LMG 19005 / NCIMB 14063 / MR-1)).